A 398-amino-acid chain; its full sequence is Lipoyl synthase, mitochondrial (398 aa).

The transit peptide at 1–32 directs the protein to the mitochondrion; it reads MIALRVHNTRVVSRSLTVWTRPSPTLTLSRSL. Residues Cys-117, Cys-122, Cys-128, Cys-147, Cys-151, Cys-154, and Ser-362 each contribute to the [4Fe-4S] cluster site. The 220-residue stretch at 132–351 folds into the Radical SAM core domain; it reads KKSEATATIM…RDTALEMGFL (220 aa).

The protein belongs to the radical SAM superfamily. Lipoyl synthase family. Requires [4Fe-4S] cluster as cofactor.

It is found in the mitochondrion. The catalysed reaction is [[Fe-S] cluster scaffold protein carrying a second [4Fe-4S](2+) cluster] + N(6)-octanoyl-L-lysyl-[protein] + 2 oxidized [2Fe-2S]-[ferredoxin] + 2 S-adenosyl-L-methionine + 4 H(+) = [[Fe-S] cluster scaffold protein] + N(6)-[(R)-dihydrolipoyl]-L-lysyl-[protein] + 4 Fe(3+) + 2 hydrogen sulfide + 2 5'-deoxyadenosine + 2 L-methionine + 2 reduced [2Fe-2S]-[ferredoxin]. It participates in protein modification; protein lipoylation via endogenous pathway; protein N(6)-(lipoyl)lysine from octanoyl-[acyl-carrier-protein]: step 2/2. Its function is as follows. Catalyzes the radical-mediated insertion of two sulfur atoms into the C-6 and C-8 positions of the octanoyl moiety bound to the lipoyl domains of lipoate-dependent enzymes, thereby converting the octanoylated domains into lipoylated derivatives. In Scheffersomyces stipitis (strain ATCC 58785 / CBS 6054 / NBRC 10063 / NRRL Y-11545) (Yeast), this protein is Lipoyl synthase, mitochondrial.